Reading from the N-terminus, the 332-residue chain is 3-ketodihydrosphingosine reductase (332 aa).

Residues 1–25 form the signal peptide; it reads MLLLAAASLVAFVLLLYMVSPLISP. At 26-269 the chain is on the cytoplasmic side; it reads KPLALPGAHV…QGNFNSSIGS (244 aa). The NADPH site is built by glycine 39, serine 41, serine 42, glycine 43, arginine 64, lysine 68, and aspartate 93. The short motif at 39–43 is the GXSXG element; the sequence is GGSSG. Serine 172 acts as the Proton donor in catalysis. Tyrosine 186 functions as the Proton acceptor in the catalytic mechanism. 2 residues coordinate NADP(+): tyrosine 186 and lysine 190. Lysine 190 (lowers pKa of active site Tyr) is an active-site residue. The helical transmembrane segment at 270-290 threads the bilayer; the sequence is DGYMLSSLTCGMAPVTSIMEG. Residues 291–292 are Lumenal-facing; sequence LQ. The chain crosses the membrane as a helical span at residues 293–313; that stretch reads QVVTMGLFRTIALFYLGSFDS. At 314–331 the chain is on the cytoplasmic side; the sequence is IVRRCMMQKAKLETVDKT.

Belongs to the short-chain dehydrogenases/reductases (SDR) family.

Its subcellular location is the endoplasmic reticulum membrane. It carries out the reaction sphinganine + NADP(+) = 3-oxosphinganine + NADPH + H(+). The protein operates within lipid metabolism; sphingolipid metabolism. Catalyzes the reduction of 3'-oxosphinganine (3-ketodihydrosphingosine/KDS) to sphinganine (dihydrosphingosine/DHS), the second step of de novo sphingolipid biosynthesis. The protein is 3-ketodihydrosphingosine reductase (KDSR) of Bos taurus (Bovine).